Reading from the N-terminus, the 93-residue chain is Large ribosomal subunit protein bL27 (93 aa).

The segment at 1–22 is disordered; the sequence is MAHKKAGGSSRNGRDSAGRRLG.

This sequence belongs to the bacterial ribosomal protein bL27 family.

The polypeptide is Large ribosomal subunit protein bL27 (Parvibaculum lavamentivorans (strain DS-1 / DSM 13023 / NCIMB 13966)).